A 99-amino-acid chain; its full sequence is CTP synthase (99 aa).

One can recognise a Glutamine amidotransferase type-1 domain in the interval 1-99 (TMVTKLEKDS…FIKAIIENNK (99 aa)). Arg-28 serves as a coordination point for L-glutamine. Residues His-73 and Glu-75 contribute to the active site.

This sequence belongs to the CTP synthase family. As to quaternary structure, homotetramer.

It catalyses the reaction UTP + L-glutamine + ATP + H2O = CTP + L-glutamate + ADP + phosphate + 2 H(+). The enzyme catalyses L-glutamine + H2O = L-glutamate + NH4(+). The catalysed reaction is UTP + NH4(+) + ATP = CTP + ADP + phosphate + 2 H(+). The protein operates within pyrimidine metabolism; CTP biosynthesis via de novo pathway; CTP from UDP: step 2/2. With respect to regulation, allosterically activated by GTP, when glutamine is the substrate; GTP has no effect on the reaction when ammonia is the substrate. The allosteric effector GTP functions by stabilizing the protein conformation that binds the tetrahedral intermediate(s) formed during glutamine hydrolysis. Inhibited by the product CTP, via allosteric rather than competitive inhibition. Its function is as follows. Catalyzes the ATP-dependent amination of UTP to CTP with either L-glutamine or ammonia as the source of nitrogen. Regulates intracellular CTP levels through interactions with the four ribonucleotide triphosphates. In Mycoplasma capricolum subsp. capripneumoniae, this protein is CTP synthase.